A 307-amino-acid chain; its full sequence is Ribosomal RNA small subunit methyltransferase H (307 aa).

Residues Gly32 to His34, Asp52, Phe78, Asp100, and Gln107 contribute to the S-adenosyl-L-methionine site.

Belongs to the methyltransferase superfamily. RsmH family.

The protein localises to the cytoplasm. It carries out the reaction cytidine(1402) in 16S rRNA + S-adenosyl-L-methionine = N(4)-methylcytidine(1402) in 16S rRNA + S-adenosyl-L-homocysteine + H(+). In terms of biological role, specifically methylates the N4 position of cytidine in position 1402 (C1402) of 16S rRNA. This is Ribosomal RNA small subunit methyltransferase H from Coxiella burnetii (strain CbuG_Q212) (Coxiella burnetii (strain Q212)).